We begin with the raw amino-acid sequence, 201 residues long: Holliday junction branch migration complex subunit RuvA (201 aa).

Positions 1 to 63 (MYAYIKGKLS…EDAQLLYGFM (63 aa)) are domain I. The segment at 64–142 (SEEEKGMFLS…ITEENPETLL (79 aa)) is domain II. The interval 143–153 (NFEGSESNQTS) is flexible linker. The interval 153–201 (SPILDEALLALEALGYSKRELNKVEKKLQAESYTSVDEAVKAGLKILVS) is domain III.

This sequence belongs to the RuvA family. Homotetramer. Forms an RuvA(8)-RuvB(12)-Holliday junction (HJ) complex. HJ DNA is sandwiched between 2 RuvA tetramers; dsDNA enters through RuvA and exits via RuvB. An RuvB hexamer assembles on each DNA strand where it exits the tetramer. Each RuvB hexamer is contacted by two RuvA subunits (via domain III) on 2 adjacent RuvB subunits; this complex drives branch migration. In the full resolvosome a probable DNA-RuvA(4)-RuvB(12)-RuvC(2) complex forms which resolves the HJ.

It localises to the cytoplasm. Its function is as follows. The RuvA-RuvB-RuvC complex processes Holliday junction (HJ) DNA during genetic recombination and DNA repair, while the RuvA-RuvB complex plays an important role in the rescue of blocked DNA replication forks via replication fork reversal (RFR). RuvA specifically binds to HJ cruciform DNA, conferring on it an open structure. The RuvB hexamer acts as an ATP-dependent pump, pulling dsDNA into and through the RuvAB complex. HJ branch migration allows RuvC to scan DNA until it finds its consensus sequence, where it cleaves and resolves the cruciform DNA. The sequence is that of Holliday junction branch migration complex subunit RuvA from Staphylococcus carnosus (strain TM300).